The following is a 156-amino-acid chain: Enhancer of split M1 protein (156 aa).

Positions 1–19 are cleaved as a signal peptide; the sequence is MMSQTLTLCCLGLVACVYG. Kazal-like domains follow at residues 23 to 81 and 96 to 156; these read STND…AWCS and KLEV…EEKC. 5 disulfides stabilise this stretch: Cys-29–Cys-62, Cys-33–Cys-55, Cys-102–Cys-135, Cys-106–Cys-128, and Cys-114–Cys-156.

This Drosophila simulans (Fruit fly) protein is Enhancer of split M1 protein.